A 69-amino-acid polypeptide reads, in one-letter code: Large ribosomal subunit protein uL29 (69 aa).

The protein belongs to the universal ribosomal protein uL29 family.

The polypeptide is Large ribosomal subunit protein uL29 (Carboxydothermus hydrogenoformans (strain ATCC BAA-161 / DSM 6008 / Z-2901)).